The sequence spans 125 residues: MNSLEQAEDLKAFERRLTEYIHCLQPATGRWRMLLIVVSVCTATGAWNWLIDPETQKVSFFTSLWNHPFFTISCITLIGLFFAGIHKRVVAPSIIAARCRTVLAEYNMSCDDTGKLILKPRPHVQ.

N-acetylmethionine is present on methionine 1. Transmembrane regions (helical) follow at residues 33 to 53 (MLLI…LIDP) and 65 to 85 (WNHP…FAGI).

It belongs to the CNEP1R1 family. In terms of assembly, interacts with CTDNEP1; the complex dephosphorylates LPIN1 and LPIN2.

It is found in the nucleus membrane. It localises to the cytoplasm. Its function is as follows. Forms with the serine/threonine protein phosphatase CTDNEP1 an active complex which dephosphorylates and may activate LPIN1 and LPIN2. LPIN1 and LPIN2 are phosphatidate phosphatases that catalyze the conversion of phosphatidic acid to diacylglycerol and control the metabolism of fatty acids at different levels. May indirectly modulate the lipid composition of nuclear and/or endoplasmic reticulum membranes and be required for proper nuclear membrane morphology and/or dynamics. May also indirectly regulate the production of lipid droplets and triacylglycerol. The sequence is that of Nuclear envelope phosphatase-regulatory subunit 1 (CNEP1R1) from Bos taurus (Bovine).